Reading from the N-terminus, the 24-residue chain is Protein YahV (24 aa).

The helical transmembrane segment at 4 to 24 threads the bilayer; sequence ILLNVLNIVFIGIAIILVIIC.

The protein resides in the cell inner membrane. The chain is Protein YahV from Escherichia coli (strain K12).